Reading from the N-terminus, the 369-residue chain is Variable large protein 7 (369 aa).

An N-terminal signal peptide occupies residues Met1 to Gly26. The N-palmitoyl cysteine moiety is linked to residue Cys27. Cys27 is lipidated: S-diacylglycerol cysteine.

Belongs to the variable large protein (Vlp) family. Alpha subfamily.

It localises to the cell outer membrane. Its function is as follows. The Vlp and Vsp proteins are antigenically distinct proteins, only one vlp or vsp gene is transcriptionally active at any one time. Switching between these genes is a mechanism of host immune response evasion. The sequence is that of Variable large protein 7 from Borrelia hermsii.